Consider the following 573-residue polypeptide: O-fucosyltransferase 20 (573 aa).

Over 1 to 60 the chain is Cytoplasmic; sequence MALSKNSNSNSFNKKKVSYISVPSQIINSLSSSSLQSLLVSPKKSSRSTNRFSFSYRNPR. Residues 61–81 form a helical; Signal-anchor for type II membrane protein membrane-spanning segment; it reads IWFFTLFLVSLFGMLKLGFNV. The Lumenal segment spans residues 82–573; that stretch reads DPISLPFSRY…RQQQEQQSDA (492 aa). The N-linked (GlcNAc...) asparagine glycan is linked to asparagine 138. 344 to 346 is a substrate binding site; it reads HLR. N-linked (GlcNAc...) asparagine glycans are attached at residues asparagine 385 and asparagine 517. A compositionally biased stretch (basic and acidic residues) spans 547–556; sequence AGKDVTKHPV. The segment at 547-573 is disordered; the sequence is AGKDVTKHPVPECMCSDRQQQEQQSDA. A compositionally biased stretch (polar residues) spans 563–573; sequence DRQQQEQQSDA.

This sequence belongs to the glycosyltransferase GT106 family. Interacts with RACK1A. In terms of tissue distribution, highly expressed in shoot apical meristem (SAM) and in young vegetative tissues.

It is found in the golgi apparatus membrane. The protein operates within glycan metabolism. In terms of biological role, may play a role in the biosynthesis of matrix polysaccharides and contribute to the biomechanics and development of the plant cell wall. The protein is O-fucosyltransferase 20 of Arabidopsis thaliana (Mouse-ear cress).